Reading from the N-terminus, the 188-residue chain is dCTP deaminase (188 aa).

Residues 111–116 (KSTYAR), 135–137 (TLE), glutamine 156, tyrosine 170, and glutamine 180 each bind dCTP. Glutamate 137 (proton donor/acceptor) is an active-site residue.

It belongs to the dCTP deaminase family. Homotrimer.

It carries out the reaction dCTP + H2O + H(+) = dUTP + NH4(+). It functions in the pathway pyrimidine metabolism; dUMP biosynthesis; dUMP from dCTP (dUTP route): step 1/2. Its function is as follows. Catalyzes the deamination of dCTP to dUTP. This is dCTP deaminase from Pseudomonas aeruginosa (strain UCBPP-PA14).